A 320-amino-acid chain; its full sequence is Protein MRG1 (320 aa).

Positions 1 to 28 are disordered; that stretch reads MGSSSKEETASDGDTASGGASPSNDGRL. Polar residues predominate over residues 12-24; sequence DGDTASGGASPSN. The region spanning 30–80 is the Tudor-knot domain; the sequence is SEGERVLAYHGPRVYGAKVQKVELRKKEWKYFVHYLGWNKNWDEWVSADRL. Residues 93–104 show a composition bias toward basic and acidic residues; it reads ALDKKQGVEKGT. Residues 93-147 are disordered; that stretch reads ALDKKQGVEKGTKSGRSAQTKTRSSADTKADKDDTKTNAAKGKKRKHESGNEKDN. Positions 106-115 are enriched in polar residues; that stretch reads SGRSAQTKTR. A compositionally biased stretch (basic and acidic residues) spans 116–128; sequence SSADTKADKDDTK. The region spanning 150–318 is the MRG domain; the sequence is AEKLMKIQIP…KVSDGKGKGK (169 aa).

Interacts with HAM1 and HAM2. Interacts (via MRG domain) with CO. Component of the NuA4 histone acetyltransferase complex. As to expression, ubiquitous. Mainly expressed in the vasculature of cotyledons and leaves, and in roots and inflorescences.

It is found in the nucleus. Functionally, chromatin remodeling factor. Acts as a 'reader' protein by binding to H3K36me3 and H3K36me3 to control histone H4 acetylation. Increases the transcriptional levels of the flowering time genes FLC and FT. Binds the chromatin at the FT promoter upon interaction with CO. The polypeptide is Protein MRG1 (Arabidopsis thaliana (Mouse-ear cress)).